Consider the following 394-residue polypeptide: Dual-specificity RNA methyltransferase RlmN (394 aa).

Glu-92 functions as the Proton acceptor in the catalytic mechanism. Residues Glu-98 to Asp-341 enclose the Radical SAM core domain. The cysteines at positions 105 and 346 are disulfide-linked. [4Fe-4S] cluster contacts are provided by Cys-112, Cys-116, and Cys-119. S-adenosyl-L-methionine is bound by residues Gly-166 to Glu-167, Ser-198, Ser-220 to His-222, and Asn-303. Cys-346 functions as the S-methylcysteine intermediate in the catalytic mechanism. The tract at residues Asp-374–Arg-394 is disordered.

The protein belongs to the radical SAM superfamily. RlmN family. Requires [4Fe-4S] cluster as cofactor.

The protein localises to the cytoplasm. It carries out the reaction adenosine(2503) in 23S rRNA + 2 reduced [2Fe-2S]-[ferredoxin] + 2 S-adenosyl-L-methionine = 2-methyladenosine(2503) in 23S rRNA + 5'-deoxyadenosine + L-methionine + 2 oxidized [2Fe-2S]-[ferredoxin] + S-adenosyl-L-homocysteine. The enzyme catalyses adenosine(37) in tRNA + 2 reduced [2Fe-2S]-[ferredoxin] + 2 S-adenosyl-L-methionine = 2-methyladenosine(37) in tRNA + 5'-deoxyadenosine + L-methionine + 2 oxidized [2Fe-2S]-[ferredoxin] + S-adenosyl-L-homocysteine. Its function is as follows. Specifically methylates position 2 of adenine 2503 in 23S rRNA and position 2 of adenine 37 in tRNAs. m2A2503 modification seems to play a crucial role in the proofreading step occurring at the peptidyl transferase center and thus would serve to optimize ribosomal fidelity. This Methylibium petroleiphilum (strain ATCC BAA-1232 / LMG 22953 / PM1) protein is Dual-specificity RNA methyltransferase RlmN.